Reading from the N-terminus, the 190-residue chain is Inner membrane-spanning protein YciB (190 aa).

A run of 6 helical transmembrane segments spans residues 3–23, 24–44, 49–69, 76–96, 121–141, and 149–169; these read FLFD…AGIY, VATT…WFKH, AMQW…LIFH, WKPT…VVVV, LVWA…AYNF, and FKLF…SVWL.

It belongs to the YciB family.

It is found in the cell inner membrane. Its function is as follows. Plays a role in cell envelope biogenesis, maintenance of cell envelope integrity and membrane homeostasis. This chain is Inner membrane-spanning protein YciB, found in Ralstonia pickettii (strain 12J).